A 164-amino-acid chain; its full sequence is uncharacterized protein (164 aa).

The tract at residues G144–A164 is disordered.

This is an uncharacterized protein from Synechocystis sp. (strain ATCC 27184 / PCC 6803 / Kazusa).